A 190-amino-acid polypeptide reads, in one-letter code: dTTP/UTP pyrophosphatase (190 aa).

Aspartate 68 serves as the catalytic Proton acceptor.

It belongs to the Maf family. YhdE subfamily. It depends on a divalent metal cation as a cofactor.

Its subcellular location is the cytoplasm. It carries out the reaction dTTP + H2O = dTMP + diphosphate + H(+). The enzyme catalyses UTP + H2O = UMP + diphosphate + H(+). Nucleoside triphosphate pyrophosphatase that hydrolyzes dTTP and UTP. May have a dual role in cell division arrest and in preventing the incorporation of modified nucleotides into cellular nucleic acids. The sequence is that of dTTP/UTP pyrophosphatase from Acholeplasma laidlawii (strain PG-8A).